A 643-amino-acid chain; its full sequence is MSMTPKTPILDTVNSPADLKNLPLDRLKSLADEVRAETIDAVSVTGGHLGAGLGVVELTTALHHVFDTPTDTLIWDVGHQCYPHKILTGRRDRIRTLRQPGGLSGFTKRSESEYDPFGAAHASTSISAALGFAVGRDLKDENRNVIAVIGDGSMSAGMAYEAMNNAGHIGGRLIVILNDNDMSIAPPVGAMSHYFARLVSSQRYRSIRKLGKGVAKALRVEEAARRAEEYMRGMAMGGTLFEEMGFRYVGPIDGHDLDQLVPVLRNVRDGDNGPVLIHVVTQKGKGYAPAEASDDKYHGVAKFNVITGEQQKSKAAAPSYTKVFAQQLIREAEADSRVVGVTAAMPGGTGLDLFGERFPDRMFDVGIAEQHAVTFAAGLAADGMKPFAAIYSTFLQRGYDQVVHDVAIQKLPVRFAIDRAGLVGADGATHAGSFDIGYLGALPGMVLMAAADELELSRMVKTAALIDDGPSAFRYPRGNGTGIEIPDQIEPLEIGKGRIVREGSRIAILSLGTRLEESLKAADALAAQGFSTTVADARFAKPLDEDLILRLAREHEVLITVEEGAVGGFGAFVLHMLADKGALDRGLRIRTLTLPDVFQDQEAPFDMYETAGLNARHIAAKALEAMGKDDAAAERVAAALIAG.

Thiamine diphosphate-binding positions include H79 and 120 to 122 (AHA). A Mg(2+)-binding site is contributed by D151. Residues 152-153 (GS), N180, Y287, and E369 each bind thiamine diphosphate. N180 contacts Mg(2+).

It belongs to the transketolase family. DXPS subfamily. In terms of assembly, homodimer. Requires Mg(2+) as cofactor. It depends on thiamine diphosphate as a cofactor.

It carries out the reaction D-glyceraldehyde 3-phosphate + pyruvate + H(+) = 1-deoxy-D-xylulose 5-phosphate + CO2. Its pathway is metabolic intermediate biosynthesis; 1-deoxy-D-xylulose 5-phosphate biosynthesis; 1-deoxy-D-xylulose 5-phosphate from D-glyceraldehyde 3-phosphate and pyruvate: step 1/1. Functionally, catalyzes the acyloin condensation reaction between C atoms 2 and 3 of pyruvate and glyceraldehyde 3-phosphate to yield 1-deoxy-D-xylulose-5-phosphate (DXP). This chain is 1-deoxy-D-xylulose-5-phosphate synthase, found in Maricaulis maris (strain MCS10) (Caulobacter maris).